The primary structure comprises 411 residues: Keratin, type I cytoskeletal 12 (411 aa).

The tract at residues 1 to 42 (DHDYEFPGIQAFAGLGMGFGGSPGGGSLYLPSGNDGGLLSGS) is head. Residues 43–78 (EKETMQNLNDRLASYLDKVRALEDANAELENKIREW) form a coil 1A region. An IF rod domain is found at 43-359 (EKETMQNLND…RLLDGEAQGD (317 aa)). The interval 83–101 (GHGHGDCGPQHDYSKYHPL) is linker 1. Residues 102 to 193 (IEDLRNKIIS…KNHEEELQSC (92 aa)) form a coil 1B region. Residues 194 to 216 (RAGGPGEVSVEMDAAPGVDLTRL) are linker 12. Positions 217–354 (LNDMRAQYEA…IETYRRLLDG (138 aa)) are coil 2. The tail stretch occupies residues 355 to 411 (EAQGDGLDESSAMTGSRSQAQSIDSSKDPSKTRKIKTIVQEVVNGEVVSSQVQEIQN). Residues 356 to 387 (AQGDGLDESSAMTGSRSQAQSIDSSKDPSKTR) form a disordered region. Residues 365–378 (SAMTGSRSQAQSID) show a composition bias toward polar residues.

It belongs to the intermediate filament family. Heterotetramer of two type I and two type II keratins. Keratin-3 associates with keratin-12. Cornea specific. Associated mainly with all layers of the central corneal epithelium and also found in the suprabasal limbal epithelium.

Functionally, involved in corneal epithelium organization, integrity and corneal keratin expression. The polypeptide is Keratin, type I cytoskeletal 12 (KRT12) (Oryctolagus cuniculus (Rabbit)).